A 316-amino-acid chain; its full sequence is 4-hydroxy-3-methylbut-2-enyl diphosphate reductase (316 aa).

Residue Cys12 coordinates [4Fe-4S] cluster. Residues His41 and His74 each contribute to the (2E)-4-hydroxy-3-methylbut-2-enyl diphosphate site. His41 and His74 together coordinate dimethylallyl diphosphate. 2 residues coordinate isopentenyl diphosphate: His41 and His74. Residue Cys96 participates in [4Fe-4S] cluster binding. A (2E)-4-hydroxy-3-methylbut-2-enyl diphosphate-binding site is contributed by His124. Residue His124 participates in dimethylallyl diphosphate binding. His124 is a binding site for isopentenyl diphosphate. Catalysis depends on Glu126, which acts as the Proton donor. Residue Thr167 participates in (2E)-4-hydroxy-3-methylbut-2-enyl diphosphate binding. Residue Cys197 coordinates [4Fe-4S] cluster. Positions 225, 226, 227, and 269 each coordinate (2E)-4-hydroxy-3-methylbut-2-enyl diphosphate. Dimethylallyl diphosphate contacts are provided by Ser225, Ser226, Asn227, and Ser269. Isopentenyl diphosphate contacts are provided by Ser225, Ser226, Asn227, and Ser269.

The protein belongs to the IspH family. In terms of assembly, homodimer. The cofactor is [4Fe-4S] cluster.

The catalysed reaction is isopentenyl diphosphate + 2 oxidized [2Fe-2S]-[ferredoxin] + H2O = (2E)-4-hydroxy-3-methylbut-2-enyl diphosphate + 2 reduced [2Fe-2S]-[ferredoxin] + 2 H(+). The enzyme catalyses dimethylallyl diphosphate + 2 oxidized [2Fe-2S]-[ferredoxin] + H2O = (2E)-4-hydroxy-3-methylbut-2-enyl diphosphate + 2 reduced [2Fe-2S]-[ferredoxin] + 2 H(+). It participates in isoprenoid biosynthesis; dimethylallyl diphosphate biosynthesis; dimethylallyl diphosphate from (2E)-4-hydroxy-3-methylbutenyl diphosphate: step 1/1. Its pathway is isoprenoid biosynthesis; isopentenyl diphosphate biosynthesis via DXP pathway; isopentenyl diphosphate from 1-deoxy-D-xylulose 5-phosphate: step 6/6. Catalyzes the conversion of 1-hydroxy-2-methyl-2-(E)-butenyl 4-diphosphate (HMBPP) into a mixture of isopentenyl diphosphate (IPP) and dimethylallyl diphosphate (DMAPP). Acts in the terminal step of the DOXP/MEP pathway for isoprenoid precursor biosynthesis. This chain is 4-hydroxy-3-methylbut-2-enyl diphosphate reductase, found in Klebsiella pneumoniae (strain 342).